The following is an 835-amino-acid chain: Leucine--tRNA ligase (835 aa).

The short motif at 36–46 (PYPSGKIHVGH) is the 'HIGH' region element. The short motif at 602 to 606 (KMSKS) is the 'KMSKS' region element. Lysine 605 is an ATP binding site.

Belongs to the class-I aminoacyl-tRNA synthetase family.

It is found in the cytoplasm. The catalysed reaction is tRNA(Leu) + L-leucine + ATP = L-leucyl-tRNA(Leu) + AMP + diphosphate. The protein is Leucine--tRNA ligase of Rickettsia massiliae (strain Mtu5).